We begin with the raw amino-acid sequence, 219 residues long: C-8 sterol isomerase erg2 (219 aa).

Residues 1–21 traverse the membrane as a helical segment; sequence MKLTKFLTVFIPFIAGLIYYI.

Belongs to the ERG2 family.

The protein resides in the endoplasmic reticulum membrane. The enzyme catalyses fecosterol = episterol. Its pathway is steroid metabolism; ergosterol biosynthesis. In terms of biological role, C-8 sterol isomerase; part of the third module of ergosterol biosynthesis pathway that includes by the late steps of the pathway. Erg2 catalyzes the reaction which results in unsaturation at C-7 in the B ring of sterols and thus converts fecosterol to episterol. The third module or late pathway involves the ergosterol synthesis itself through consecutive reactions that mainly occur in the endoplasmic reticulum (ER) membrane. Firstly, the squalene synthase erg9 catalyzes the condensation of 2 farnesyl pyrophosphate moieties to form squalene, which is the precursor of all steroids. Secondly, squalene is converted into lanosterol by the consecutive action of the squalene epoxidase erg1 and the lanosterol synthase erg7. The lanosterol 14-alpha-demethylase erg11/cyp1 catalyzes C14-demethylation of lanosterol to produce 4,4'-dimethyl cholesta-8,14,24-triene-3-beta-ol. In the next steps, a complex process involving various demethylation, reduction and desaturation reactions catalyzed by the C-14 reductase erg24 and the C-4 demethylation complex erg25-erg26-erg27 leads to the production of zymosterol. Erg28 likely functions in the C-4 demethylation complex reaction by tethering erg26 and Erg27 to the endoplasmic reticulum or to facilitate interaction between these proteins. Then, the sterol 24-C-methyltransferase erg6 catalyzes the methyl transfer from S-adenosyl-methionine to the C-24 of zymosterol to form fecosterol. The C-8 sterol isomerase erg2 catalyzes the reaction which results in unsaturation at C-7 in the B ring of sterols and thus converts fecosterol to episterol. The sterol-C5-desaturases erg31 and erg32 then catalyze the introduction of a C-5 double bond in the B ring to produce 5-dehydroepisterol. The C-22 sterol desaturase erg5 further converts 5-dehydroepisterol into ergosta-5,7,22,24(28)-tetraen-3beta-ol by forming the C-22(23) double bond in the sterol side chain. Finally, ergosta-5,7,22,24(28)-tetraen-3beta-ol is substrate of the C-24(28) sterol reductase erg4 to produce ergosterol. In the genus Schizosaccharomyces, a second route exists between lanosterol and fecosterol, via the methylation of lanosterol to eburicol by erg6, followed by C14-demethylation by erg11/cyp1 and C4-demethylation by the demethylation complex erg25-erg26-erg27. In Schizosaccharomyces pombe (strain 972 / ATCC 24843) (Fission yeast), this protein is C-8 sterol isomerase erg2.